Consider the following 65-residue polypeptide: Large ribosomal subunit protein bL35 (65 aa).

The segment covering 1-16 has biased composition (basic residues); sequence MPKQKTHRASAKRFKR. The interval 1-21 is disordered; that stretch reads MPKQKTHRASAKRFKRTGSGG.

It belongs to the bacterial ribosomal protein bL35 family.

This is Large ribosomal subunit protein bL35 from Streptococcus pyogenes serotype M18 (strain MGAS8232).